The primary structure comprises 316 residues: Palmitoyltransferase ZDHHC3-A (316 aa).

The Cytoplasmic portion of the chain corresponds to 1–45 (MRSPVPRFRDVERQASGLQPPQCLPSCHERQSSMWFIKDACGIVC). Residues 46 to 66 (AIITWFLVFFAEFVVLFVMLI) form a helical membrane-spanning segment. Residues 67–70 (PSKN) lie on the Lumenal side of the membrane. A helical transmembrane segment spans residues 71-91 (LTYSLVNGTLFNSLAFLALAS). At 92–169 (HFRAMCTDPG…NCVGENNQKY (78 aa)) the chain is on the cytoplasmic side. Residues 124-175 (VYKCPKCCSIKPDRAHHCSVCKRCIRKMDHHCPWVNNCVGENNQKYFVLFTM) enclose the DHHC domain. Cys-144 carries S-palmitoyl cysteine lipidation. Cys-155 serves as the catalytic S-palmitoyl cysteine intermediate. The helical transmembrane segment at 170 to 190 (FVLFTMYICLISLHSLVMVVF) threads the bilayer. The Lumenal portion of the chain corresponds to 191–212 (HFLNCFEDDWTKCSTFSPPATV). The helical transmembrane segment at 213-233 (ILLILLCFEGLLFLIFTSVMF) threads the bilayer. Over 234 to 316 (GTQVHSICTD…DVIEIPLEPH (83 aa)) the chain is Cytoplasmic.

This sequence belongs to the DHHC palmitoyltransferase family. Monomer. Homooligomers. The monomeric form has a higher catalytic activity. Forms heterooligomers with zdhhc7. In terms of processing, autopalmitoylated.

It is found in the golgi apparatus membrane. The catalysed reaction is L-cysteinyl-[protein] + hexadecanoyl-CoA = S-hexadecanoyl-L-cysteinyl-[protein] + CoA. It carries out the reaction L-cysteinyl-[protein] + tetradecanoyl-CoA = S-tetradecanoyl-L-cysteinyl-[protein] + CoA. The enzyme catalyses L-cysteinyl-[protein] + octadecanoyl-CoA = S-octadecanoyl-L-cysteinyl-[protein] + CoA. Golgi-localized palmitoyltransferase that catalyzes the addition of palmitate onto various protein substrates and regulates their association with membranes. Has no stringent fatty acid selectivity and in addition to palmitate can also transfer onto target proteins myristate from tetradecanoyl-CoA and stearate from octadecanoyl-CoA. The polypeptide is Palmitoyltransferase ZDHHC3-A (zdhhc3a) (Danio rerio (Zebrafish)).